The sequence spans 91 residues: Probable Fe(2+)-trafficking protein (91 aa).

It belongs to the Fe(2+)-trafficking protein family.

Its function is as follows. Could be a mediator in iron transactions between iron acquisition and iron-requiring processes, such as synthesis and/or repair of Fe-S clusters in biosynthetic enzymes. This chain is Probable Fe(2+)-trafficking protein, found in Burkholderia ambifaria (strain MC40-6).